A 1024-amino-acid polypeptide reads, in one-letter code: Nardilysin-like (1024 aa).

A disordered region spans residues 41 to 103; it reads PDIYPEGSVP…DEVKGKGDHQ (63 aa). Positions 52 to 95 are enriched in acidic residues; the sequence is QIDEDDEDGEEEDSDGSSEDDDDDEDDEEDGEGDEEDEDEDEDE. Residue histidine 129 participates in Zn(2+) binding. Glutamate 132 functions as the Proton acceptor in the catalytic mechanism. Histidine 133 contacts Zn(2+). Residue glutamate 203 is part of the active site. Residue glutamate 210 coordinates Zn(2+).

The protein belongs to the peptidase M16 family. Requires Zn(2+) as cofactor.

The enzyme catalyses Hydrolysis of polypeptides, preferably at -Xaa-|-Arg-Lys-, and less commonly at -Arg-|-Arg-Xaa-, in which Xaa is not Arg or Lys.. In terms of biological role, cleaves peptide substrates on the N-terminus of arginine residues in dibasic pairs. This is Nardilysin-like from Arabidopsis thaliana (Mouse-ear cress).